Reading from the N-terminus, the 458-residue chain is Cell division protein FtsZ (458 aa).

Residues Gly-22 to Asn-26, Gly-109 to Gly-111, Glu-140, Arg-144, and Asp-188 each bind GTP. The interval Lys-319 to Asp-458 is disordered. Polar residues predominate over residues Asn-368 to Ile-379. Basic and acidic residues predominate over residues Lys-401–Lys-418. The span at Ser-425–Thr-439 shows a compositional bias: low complexity.

Belongs to the FtsZ family. As to quaternary structure, homodimer. Polymerizes to form a dynamic ring structure in a strictly GTP-dependent manner. Interacts directly with several other division proteins.

The protein localises to the cytoplasm. In terms of biological role, essential cell division protein that forms a contractile ring structure (Z ring) at the future cell division site. The regulation of the ring assembly controls the timing and the location of cell division. One of the functions of the FtsZ ring is to recruit other cell division proteins to the septum to produce a new cell wall between the dividing cells. Binds GTP and shows GTPase activity. This Lactobacillus johnsonii (strain CNCM I-12250 / La1 / NCC 533) protein is Cell division protein FtsZ.